We begin with the raw amino-acid sequence, 86 residues long: Small ribosomal subunit protein bS20 (86 aa).

This sequence belongs to the bacterial ribosomal protein bS20 family.

Binds directly to 16S ribosomal RNA. The sequence is that of Small ribosomal subunit protein bS20 from Sulfurimonas denitrificans (strain ATCC 33889 / DSM 1251) (Thiomicrospira denitrificans (strain ATCC 33889 / DSM 1251)).